Reading from the N-terminus, the 112-residue chain is MALGHYEIKKAKNGQYHFNLKASNGEIILSSEMYASKASAENGIASVQSNSPQESQYELKHNTKNEPYFVLKAKNHQVIGVSESYSSPTAAKNGIASVMKNGLSTVIKDLTL.

Repeat copies occupy residues 11 to 59 and 62 to 110.

It belongs to the UPF0339 family. Duplicated subfamily.

The protein is UPF0339 protein YegP (yegP) of Yersinia pestis.